Consider the following 95-residue polypeptide: Aspartyl/glutamyl-tRNA(Asn/Gln) amidotransferase subunit C (95 aa).

It belongs to the GatC family. In terms of assembly, heterotrimer of A, B and C subunits.

The catalysed reaction is L-glutamyl-tRNA(Gln) + L-glutamine + ATP + H2O = L-glutaminyl-tRNA(Gln) + L-glutamate + ADP + phosphate + H(+). It catalyses the reaction L-aspartyl-tRNA(Asn) + L-glutamine + ATP + H2O = L-asparaginyl-tRNA(Asn) + L-glutamate + ADP + phosphate + 2 H(+). In terms of biological role, allows the formation of correctly charged Asn-tRNA(Asn) or Gln-tRNA(Gln) through the transamidation of misacylated Asp-tRNA(Asn) or Glu-tRNA(Gln) in organisms which lack either or both of asparaginyl-tRNA or glutaminyl-tRNA synthetases. The reaction takes place in the presence of glutamine and ATP through an activated phospho-Asp-tRNA(Asn) or phospho-Glu-tRNA(Gln). This Rhodospirillum centenum (strain ATCC 51521 / SW) protein is Aspartyl/glutamyl-tRNA(Asn/Gln) amidotransferase subunit C.